Consider the following 759-residue polypeptide: 1,4-alpha-glucan branching enzyme GlgB (759 aa).

Asp-431 serves as the catalytic Nucleophile. Residue Glu-484 is the Proton donor of the active site.

This sequence belongs to the glycosyl hydrolase 13 family. GlgB subfamily. As to quaternary structure, monomer.

The catalysed reaction is Transfers a segment of a (1-&gt;4)-alpha-D-glucan chain to a primary hydroxy group in a similar glucan chain.. Its pathway is glycan biosynthesis; glycogen biosynthesis. Catalyzes the formation of the alpha-1,6-glucosidic linkages in glycogen by scission of a 1,4-alpha-linked oligosaccharide from growing alpha-1,4-glucan chains and the subsequent attachment of the oligosaccharide to the alpha-1,6 position. The sequence is that of 1,4-alpha-glucan branching enzyme GlgB from Prochlorococcus marinus (strain MIT 9211).